A 46-amino-acid polypeptide reads, in one-letter code: Photosystem II reaction center protein K (46 aa).

A propeptide spanning residues 1–9 (MESILMIFA) is cleaved from the precursor. A helical transmembrane segment spans residues 25 to 45 (LPVIPVLFLLLAFVWQAAVSF).

This sequence belongs to the PsbK family. PSII is composed of 1 copy each of membrane proteins PsbA, PsbB, PsbC, PsbD, PsbE, PsbF, PsbH, PsbI, PsbJ, PsbK, PsbL, PsbM, PsbT, PsbX, PsbY, PsbZ, Psb30/Ycf12, at least 3 peripheral proteins of the oxygen-evolving complex and a large number of cofactors. It forms dimeric complexes.

It is found in the plastid. Its subcellular location is the chloroplast thylakoid membrane. Functionally, one of the components of the core complex of photosystem II (PSII). PSII is a light-driven water:plastoquinone oxidoreductase that uses light energy to abstract electrons from H(2)O, generating O(2) and a proton gradient subsequently used for ATP formation. It consists of a core antenna complex that captures photons, and an electron transfer chain that converts photonic excitation into a charge separation. The polypeptide is Photosystem II reaction center protein K (Stigeoclonium helveticum (Green alga)).